Reading from the N-terminus, the 2254-residue chain is Genome polyprotein (2254 aa).

The region spanning 438–592 (QTTINELAQL…EQWLVDNPGR (155 aa)) is the SF3 helicase domain. Residue 464-471 (GPPGIGKT) participates in ATP binding. Tyr-956 is subject to O-(5'-phospho-RNA)-tyrosine. The region spanning 1041–1196 (GDTYDSEGRG…KKLVSRVQTK (156 aa)) is the Peptidase C24 domain. Residues His-1078, Asp-1099, and Cys-1163 each act as for 3CLpro activity in the active site. The RdRp catalytic domain occupies 1434 to 1559 (RVLYCLDYSK…GLTPATASIM (126 aa)). The segment at 1714–1742 (PAPTRSVASNPEGTQNSNESRPVQPAGPM) is disordered. Over residues 1719–1734 (SVASNPEGTQNSNESR) the composition is skewed to polar residues.

As to quaternary structure, homodimer. Homomultimer. In terms of assembly, interacts with host IEF4E; this interaction plays a role in translation of viral proteins. In terms of processing, specific enzymatic cleavages in vivo yield mature proteins. Pro-Pol is first autocatalytically cleaved, then processes the whole polyprotein. Post-translationally, VPg is uridylylated by the polymerase and is covalently attached to the 5'-end of the polyadenylated genomic and subgenomic RNAs. This uridylylated form acts as a nucleotide-peptide primer for the polymerase.

The protein resides in the virion. Its subcellular location is the host cytoplasm. The enzyme catalyses a ribonucleoside 5'-triphosphate + H2O = a ribonucleoside 5'-diphosphate + phosphate + H(+). It catalyses the reaction RNA(n) + a ribonucleoside 5'-triphosphate = RNA(n+1) + diphosphate. The catalysed reaction is Endopeptidase with a preference for cleavage when the P1 position is occupied by Glu-|-Xaa and the P1' position is occupied by Gly-|-Yaa.. Its function is as follows. Together with NTPase and NS4, initiates the formation of the replication complex. Induces the proliferation of the host smooth ER membranes forming long tubular structures. These remodeled membranes probably form the viral factories that contain the replication complex. Displays NTPase activity, but no helicase activity. Induces the formation of convoluted membranes derived from the host ER. These remodeled membranes probably form the viral factories that contain the replication complex. Together with NS2 and NS4, initiates the formation of the replication complex. In terms of biological role, probable key protein responsible for the formation of membrane alterations by the virus. Induces the formation of convoluted membranes derived from the host ER. These remodeled membranes probably form the viral factories that contain the replication complex. Together with NS2 and NTPase, initiates the formation of the replication complex. Functionally, viral genome-linked protein is covalently linked to the 5'-end of the positive-strand, negative-strand genomic RNAs and subgenomic RNA. Acts as a genome-linked replication primer. May recruit ribosome to viral RNA thereby promoting viral proteins translation. Interacts with host translation initiation complex to allow the translation of viral proteins. Its function is as follows. Protease-polymerase p76 processes the polyprotein: Pro-Pol is first released by autocleavage, then all other proteins are cleaved. Cleaves host translation initiation factor eIF4G1, eIF4G2 and PABP1 thereby inducing a shutdown of host protein synthesis. This shutdown may not prevent viral mRNA from being translated since viral Vpg replaces the cap. It is also an RNA-directed RNA polymerase which replicates genomic and antigenomic viral RNA by recognizing specific signals. Also transcribes a subgenomic mRNA by initiating RNA synthesis internally on antigenomic RNA. This sgRNA codes for structural proteins. Catalyzes the covalent attachment VPg with viral RNAs. Capsid protein self assembles to form an icosahedral capsid with a T=3 symmetry, about 38 nm in diameter, and consisting of 180 capsid proteins. The capsid encapsulate the genomic RNA and VP2 proteins. Attaches virion to target cells, inducing endocytosis of the viral particle. Acidification of the endosome induces conformational change of capsid protein thereby injecting virus genomic RNA into host cytoplasm. The protein is Genome polyprotein of Porcine enteric sapovirus (isolate Swine/United States/Cowden/1980) (Sw/SV/Cowden/1980/US).